A 210-amino-acid chain; its full sequence is UMP-CMP kinase 3 (210 aa).

Residue 34 to 39 (GSGKGT) coordinates ATP. The tract at residues 54–83 (SAGDLLRAEIKSGSENGTMIENMIKEGKIV) is NMP. Residues Arg60, 81–83 (KIV), and 108–111 (GFPR) each bind a ribonucleoside 5'-phosphate. Asn115 lines the CMP pocket. The LID stretch occupies residues 146-154 (GRNQGRVDD). Arg147 is an ATP binding site. A ribonucleoside 5'-phosphate contacts are provided by Arg151 and Arg162. Lys190 provides a ligand contact to ATP.

It belongs to the adenylate kinase family. UMP-CMP kinase subfamily. As to quaternary structure, monomer. The cofactor is Mg(2+).

The protein localises to the cytoplasm. Its subcellular location is the nucleus. The enzyme catalyses UMP + ATP = UDP + ADP. It catalyses the reaction CMP + ATP = CDP + ADP. The catalysed reaction is dCMP + ATP = dCDP + ADP. Functionally, catalyzes the phosphorylation of pyrimidine nucleoside monophosphates at the expense of ATP. Plays an important role in de novo pyrimidine nucleotide biosynthesis. Has preference for UMP and CMP as phosphate acceptors. The sequence is that of UMP-CMP kinase 3 (URA6) from Oryza sativa subsp. japonica (Rice).